A 270-amino-acid polypeptide reads, in one-letter code: 4-hydroxy-tetrahydrodipicolinate reductase (270 aa).

Residues 9 to 14 (GSGGRM) and Glu-35 contribute to the NAD(+) site. Arg-36 provides a ligand contact to NADP(+). NAD(+) contacts are provided by residues 99 to 101 (GTT) and 123 to 126 (ASNY). His-156 (proton donor/acceptor) is an active-site residue. Residue His-157 coordinates (S)-2,3,4,5-tetrahydrodipicolinate. Lys-160 (proton donor) is an active-site residue. 166 to 167 (GT) contacts (S)-2,3,4,5-tetrahydrodipicolinate.

It belongs to the DapB family.

It localises to the cytoplasm. The catalysed reaction is (S)-2,3,4,5-tetrahydrodipicolinate + NAD(+) + H2O = (2S,4S)-4-hydroxy-2,3,4,5-tetrahydrodipicolinate + NADH + H(+). It carries out the reaction (S)-2,3,4,5-tetrahydrodipicolinate + NADP(+) + H2O = (2S,4S)-4-hydroxy-2,3,4,5-tetrahydrodipicolinate + NADPH + H(+). It functions in the pathway amino-acid biosynthesis; L-lysine biosynthesis via DAP pathway; (S)-tetrahydrodipicolinate from L-aspartate: step 4/4. In terms of biological role, catalyzes the conversion of 4-hydroxy-tetrahydrodipicolinate (HTPA) to tetrahydrodipicolinate. This Histophilus somni (strain 2336) (Haemophilus somnus) protein is 4-hydroxy-tetrahydrodipicolinate reductase.